A 354-amino-acid polypeptide reads, in one-letter code: Rhodopsin (354 aa).

Over 1-36 (MNGTEGPNFYVPMSNKTGIVRSPFEYPQYYLAEPWK) the chain is Extracellular. N-linked (GlcNAc...) asparagine glycans are attached at residues Asn-2 and Asn-15. A helical transmembrane segment spans residues 37-61 (YSVLAAYMFLLILLGLPINFMTLYV). The Cytoplasmic segment spans residues 62 to 73 (TIQHKKLRTPLN). A helical membrane pass occupies residues 74–96 (YILLNLAFANHFMVLCGFTITMY). Over 97 to 110 (TSLHGYFVFGQTGC) the chain is Extracellular. Residues Cys-110 and Cys-187 are joined by a disulfide bond. Residues 111 to 133 (YFEGFFATLGGEIALWSLVVLAI) form a helical membrane-spanning segment. The 'Ionic lock' involved in activated form stabilization signature appears at 134-136 (ERY). At 134–152 (ERYIVVCKPMSNFRFGENH) the chain is on the cytoplasmic side. The chain crosses the membrane as a helical span at residues 153–173 (AMMGVAFTWIMALACAVPPLF). The Extracellular segment spans residues 174–202 (GWSRYIPEGMQCSCGVDYYTLKPEVNNES). A helical membrane pass occupies residues 203 to 224 (FVIYMFVVHFLIPLIIISFCYG). Over 225-252 (RLVCTVKEAAAQQQESATTQKAEKEVTR) the chain is Cytoplasmic. Residues 253-274 (MVVIMVIFFLICWVPYAYVAFY) form a helical membrane-spanning segment. Residues 275-286 (IFTHQGSEFGPI) are Extracellular-facing. The chain crosses the membrane as a helical span at residues 287-308 (FMTVPAFFAKSSAIYNPVIYIM). At Lys-296 the chain carries N6-(retinylidene)lysine. The Cytoplasmic segment spans residues 309–354 (LNKQFRNCMITTLCCGKNPFGDEDASSAATSKTEATSVSTSQVSPA). 2 S-palmitoyl cysteine lipidation sites follow: Cys-322 and Cys-323. The disordered stretch occupies residues 331 to 354 (EDASSAATSKTEATSVSTSQVSPA). The segment covering 334-354 (SSAATSKTEATSVSTSQVSPA) has biased composition (low complexity).

This sequence belongs to the G-protein coupled receptor 1 family. Opsin subfamily. Post-translationally, contains one covalently linked retinal chromophore. Upon light absorption, the covalently bound 11-cis-retinal is converted to all-trans-retinal. After hydrolysis of the Schiff base and release of the covalently bound all-trans-retinal, active rhodopsin is regenerated by binding of a fresh molecule of 11-cis-retinal. Retina. Localized in the ventral part of the retina.

The protein localises to the membrane. It localises to the cell projection. It is found in the cilium. The protein resides in the photoreceptor outer segment. Functionally, photoreceptor required for image-forming vision at low light intensity. Required for photoreceptor cell viability after birth. May use a mixture of retinal and 3-dehydroretinal as visual pigment. Light-induced isomerization of 11-cis to all-trans retinal triggers a conformational change that activates signaling via G-proteins. Subsequent receptor phosphorylation mediates displacement of the bound G-protein alpha subunit by arrestin and terminates signaling. The chain is Rhodopsin (RHO) from Aquarana catesbeiana (American bullfrog).